Here is a 95-residue protein sequence, read N- to C-terminus: Small ribosomal subunit protein bS16 (95 aa).

The protein belongs to the bacterial ribosomal protein bS16 family.

The sequence is that of Small ribosomal subunit protein bS16 from Thermotoga maritima (strain ATCC 43589 / DSM 3109 / JCM 10099 / NBRC 100826 / MSB8).